The sequence spans 284 residues: Polyamine aminopropyltransferase (284 aa).

Positions 4–238 (EVWNTERLHD…GPMALGWGSH (235 aa)) constitute a PABS domain. Residue Q33 participates in S-methyl-5'-thioadenosine binding. 2 residues coordinate spermidine: H64 and D88. S-methyl-5'-thioadenosine is bound by residues E108 and 140–141 (DG). D158 (proton acceptor) is an active-site residue. A spermidine-binding site is contributed by 158 to 161 (DSTD). P165 contributes to the S-methyl-5'-thioadenosine binding site.

This sequence belongs to the spermidine/spermine synthase family. As to quaternary structure, homodimer or homotetramer.

It localises to the cytoplasm. The catalysed reaction is S-adenosyl 3-(methylsulfanyl)propylamine + putrescine = S-methyl-5'-thioadenosine + spermidine + H(+). The protein operates within amine and polyamine biosynthesis; spermidine biosynthesis; spermidine from putrescine: step 1/1. Functionally, catalyzes the irreversible transfer of a propylamine group from the amino donor S-adenosylmethioninamine (decarboxy-AdoMet) to putrescine (1,4-diaminobutane) to yield spermidine. The polypeptide is Polyamine aminopropyltransferase (Ruegeria sp. (strain TM1040) (Silicibacter sp.)).